We begin with the raw amino-acid sequence, 941 residues long: Isoleucine--tRNA ligase (941 aa).

Positions 59-69 match the 'HIGH' region motif; the sequence is PYANGNIHIGH. Glutamate 562 contributes to the L-isoleucyl-5'-AMP binding site. Residues 603–607 carry the 'KMSKS' region motif; the sequence is KMSKS. ATP is bound at residue lysine 606. 4 residues coordinate Zn(2+): cysteine 904, cysteine 907, cysteine 924, and cysteine 927.

It belongs to the class-I aminoacyl-tRNA synthetase family. IleS type 1 subfamily. In terms of assembly, monomer. Zn(2+) serves as cofactor.

It is found in the cytoplasm. The enzyme catalyses tRNA(Ile) + L-isoleucine + ATP = L-isoleucyl-tRNA(Ile) + AMP + diphosphate. Catalyzes the attachment of isoleucine to tRNA(Ile). As IleRS can inadvertently accommodate and process structurally similar amino acids such as valine, to avoid such errors it has two additional distinct tRNA(Ile)-dependent editing activities. One activity is designated as 'pretransfer' editing and involves the hydrolysis of activated Val-AMP. The other activity is designated 'posttransfer' editing and involves deacylation of mischarged Val-tRNA(Ile). This Haemophilus influenzae (strain 86-028NP) protein is Isoleucine--tRNA ligase.